A 707-amino-acid chain; its full sequence is Polyribonucleotide nucleotidyltransferase (707 aa).

Aspartate 484 and aspartate 490 together coordinate Mg(2+). Residues 551 to 610 (PRVVRMVVNPEKIRDIIGPAGKTITKIISETGVKIDIEEDGRLYITAPNLEAGERAKQMI) form the KH domain. The S1 motif domain maps to 620-688 (GGIYLGKVLR…KLGRIVLSRK (69 aa)). Residues 688–707 (KDAMPDEEESDNRKSDNRKK) are disordered. A compositionally biased stretch (basic and acidic residues) spans 698–707 (DNRKSDNRKK).

Belongs to the polyribonucleotide nucleotidyltransferase family. The cofactor is Mg(2+).

The protein localises to the cytoplasm. It catalyses the reaction RNA(n+1) + phosphate = RNA(n) + a ribonucleoside 5'-diphosphate. Involved in mRNA degradation. Catalyzes the phosphorolysis of single-stranded polyribonucleotides processively in the 3'- to 5'-direction. This Caldanaerobacter subterraneus subsp. tengcongensis (strain DSM 15242 / JCM 11007 / NBRC 100824 / MB4) (Thermoanaerobacter tengcongensis) protein is Polyribonucleotide nucleotidyltransferase.